The chain runs to 550 residues: MTPADLAQLLKATAAAVLAEHGLDSAALPDTVTVERPRNPEHGDYATNLALQLGKKVGANPRELAGWLAEALAASDGIAAADVAGPGFVNLRIEASAQNVMVSNVLSAGADYGHSAVLAGKKVNLEFVSANPTGPIHIGGTRWAAVGDALGRLLTTQGAAVTREYYFNDHGAQIDRFSNSLIAAAKGEPAPEDGYAGTYIADIASQVVAKEPGVLDQPDDRMRETFRAIGVNLMFDHIKESLHEFGTDFDVYTHEDSMHTSGRVEQAIDKLRETGFAYEKDGAVWLRTTDFGDDKDRVVIKSDGKPAYIAGDLAYFLDKRKRGFDLCIYMLGADHHGYIARLKASAAALGDDPDTVEVLIGQMVNLVRDGQPVRMSKRAGTVITLDDLVEAIGVDAARYSLIRSSVDTPIDIDLELWSSASNENPVYYVQYAHARLSALARNAAELGIAPDTAHLDLLTHDKEGVLIRNIGEFPRILATAAELREPHRVSRYLEDLAGDYHRFYDACRVLPQGDEAPGDLHAARLALCAATRQVIANGLDILGVSAPERM.

The 'HIGH' region signature appears at 130–140 (ANPTGPIHIGG).

This sequence belongs to the class-I aminoacyl-tRNA synthetase family. Monomer.

It is found in the cytoplasm. It catalyses the reaction tRNA(Arg) + L-arginine + ATP = L-arginyl-tRNA(Arg) + AMP + diphosphate. The protein is Arginine--tRNA ligase of Mycolicibacterium gilvum (strain PYR-GCK) (Mycobacterium gilvum (strain PYR-GCK)).